The sequence spans 754 residues: 5-methyltetrahydropteroyltriglutamate--homocysteine methyltransferase (754 aa).

Residues 17–20 and K117 each bind 5-methyltetrahydropteroyltri-L-glutamate; that span reads RELK. Residues 431 to 433 and E484 contribute to the L-homocysteine site; that span reads IGS. L-methionine-binding positions include 431 to 433 and E484; that span reads IGS. Residues 515 to 516 and W561 contribute to the 5-methyltetrahydropteroyltri-L-glutamate site; that span reads RC. L-homocysteine is bound at residue D599. D599 contacts L-methionine. A 5-methyltetrahydropteroyltri-L-glutamate-binding site is contributed by E605. H641, C643, and E665 together coordinate Zn(2+). The active-site Proton donor is H694. C726 is a Zn(2+) binding site.

The protein belongs to the vitamin-B12 independent methionine synthase family. It depends on Zn(2+) as a cofactor.

It catalyses the reaction 5-methyltetrahydropteroyltri-L-glutamate + L-homocysteine = tetrahydropteroyltri-L-glutamate + L-methionine. It functions in the pathway amino-acid biosynthesis; L-methionine biosynthesis via de novo pathway; L-methionine from L-homocysteine (MetE route): step 1/1. Functionally, catalyzes the transfer of a methyl group from 5-methyltetrahydrofolate to homocysteine resulting in methionine formation. The polypeptide is 5-methyltetrahydropteroyltriglutamate--homocysteine methyltransferase (Salmonella newport (strain SL254)).